Reading from the N-terminus, the 215-residue chain is Large ribosomal subunit protein uL3 (215 aa).

Residues 136–155 (GVSISHRSHGSTGQRQDPGK) form a disordered region. Gln151 carries the post-translational modification N5-methylglutamine.

The protein belongs to the universal ribosomal protein uL3 family. Part of the 50S ribosomal subunit. Forms a cluster with proteins L14 and L19. Methylated by PrmB.

One of the primary rRNA binding proteins, it binds directly near the 3'-end of the 23S rRNA, where it nucleates assembly of the 50S subunit. The protein is Large ribosomal subunit protein uL3 of Rickettsia conorii (strain ATCC VR-613 / Malish 7).